The primary structure comprises 338 residues: Tetraacyldisaccharide 4'-kinase (338 aa).

53–60 (TVGGSGKT) contacts ATP.

The protein belongs to the LpxK family.

The catalysed reaction is a lipid A disaccharide + ATP = a lipid IVA + ADP + H(+). The protein operates within glycolipid biosynthesis; lipid IV(A) biosynthesis; lipid IV(A) from (3R)-3-hydroxytetradecanoyl-[acyl-carrier-protein] and UDP-N-acetyl-alpha-D-glucosamine: step 6/6. In terms of biological role, transfers the gamma-phosphate of ATP to the 4'-position of a tetraacyldisaccharide 1-phosphate intermediate (termed DS-1-P) to form tetraacyldisaccharide 1,4'-bis-phosphate (lipid IVA). The protein is Tetraacyldisaccharide 4'-kinase of Azorhizobium caulinodans (strain ATCC 43989 / DSM 5975 / JCM 20966 / LMG 6465 / NBRC 14845 / NCIMB 13405 / ORS 571).